Consider the following 490-residue polypeptide: DENN domain-containing protein 11 (490 aa).

The disordered stretch occupies residues Met-1–Glu-86. In terms of domain architecture, uDENN spans Ala-19–Pro-221. Composition is skewed to polar residues over residues Thr-30 to Thr-43 and Thr-52 to Ser-61. A cDENN domain is found at Leu-249 to Arg-397. The region spanning Leu-399–Pro-490 is the dDENN domain.

The protein belongs to the DENND11 family.

Functionally, probable guanine nucleotide exchange factor (GEF). May promote the exchange of GDP to GTP, converting inactive GDP-bound small GTPases into their active GTP-bound form. The protein is DENN domain-containing protein 11 (dennd11) of Danio rerio (Zebrafish).